Here is a 116-residue protein sequence, read N- to C-terminus: Ribosome-binding factor A (116 aa).

It belongs to the RbfA family. In terms of assembly, monomer. Binds 30S ribosomal subunits, but not 50S ribosomal subunits or 70S ribosomes.

It is found in the cytoplasm. Its function is as follows. One of several proteins that assist in the late maturation steps of the functional core of the 30S ribosomal subunit. Associates with free 30S ribosomal subunits (but not with 30S subunits that are part of 70S ribosomes or polysomes). Required for efficient processing of 16S rRNA. May interact with the 5'-terminal helix region of 16S rRNA. This chain is Ribosome-binding factor A, found in Staphylococcus aureus (strain JH9).